The following is a 218-amino-acid chain: uncharacterized protein (218 aa).

The protein belongs to the HAD-like hydrolase superfamily.

It is found in the cytoplasm. Its subcellular location is the nucleus. This is an uncharacterized protein from Saccharomyces cerevisiae (strain ATCC 204508 / S288c) (Baker's yeast).